The following is a 194-amino-acid chain: CASP-like protein 4C1 (194 aa).

The Cytoplasmic portion of the chain corresponds to 1–35; sequence MRSPHAFRNGESPTLRDHTHFHSTVTAQKLRRFNS. Residues 36–56 traverse the membrane as a helical segment; the sequence is LILLLRLASFSFSLASAVFML. Residues 57 to 74 are Extracellular-facing; that stretch reads TNSRGSASPHWYDFDAFR. Residues 75–95 form a helical membrane-spanning segment; the sequence is FVFVANAIVALYSVFEMGTCV. The Cytoplasmic segment spans residues 96-114; sequence WEFSRETTLWPEAFQVWFD. A helical transmembrane segment spans residues 115–135; sequence FGHDQVFSYLLLSAGSAAAAL. The Extracellular segment spans residues 136–157; it reads ARTMRGGDTCTANKAFCLQSDV. The chain crosses the membrane as a helical span at residues 158–178; that stretch reads AIGLGFAAFLFLAFSSCFSGF. Residues 179–194 are Cytoplasmic-facing; sequence RVACFLITGSRFHLYS.

This sequence belongs to the Casparian strip membrane proteins (CASP) family. As to quaternary structure, homodimer and heterodimers.

The protein localises to the cell membrane. This is CASP-like protein 4C1 from Arabidopsis thaliana (Mouse-ear cress).